A 92-amino-acid polypeptide reads, in one-letter code: RNA-binding protein Hfq (92 aa).

One can recognise a Sm domain in the interval Asp-9 to Phe-68.

This sequence belongs to the Hfq family. Homohexamer.

In terms of biological role, RNA chaperone that binds small regulatory RNA (sRNAs) and mRNAs to facilitate mRNA translational regulation in response to envelope stress, environmental stress and changes in metabolite concentrations. Also binds with high specificity to tRNAs. This Shewanella halifaxensis (strain HAW-EB4) protein is RNA-binding protein Hfq.